Here is a 505-residue protein sequence, read N- to C-terminus: Kinesin light chain 3 (505 aa).

Residues 1 to 20 are disordered; it reads MSVQVAAPGSTGLGPERLNP. Residues 90–150 are a coiled coil; the sequence is ALSAHVGVLE…EEEKSHLQFL (61 aa). Residues 154 to 197 are disordered; the sequence is RQYDPPEESQRPDSPPRRDSLASLFPSEEEEKKGPEAAGAAAAQ. Basic and acidic residues predominate over residues 161–173; it reads ESQRPDSPPRRDS. Phosphoserine is present on Ser173. TPR repeat units lie at residues 207–240, 249–282, 291–324, 333–366, and 375–408; these read LRTLHNLVIQYASQGRYEVAVPLCRQALEDLERS, ATMLNILALVYRDQNKYKEATELLHDALQIREQT, AATLNNLAVLYGKRGRYREAEPLCQRALEIREKV, AKQLNNLALLCQNQGKFQDVERHYARALSIYEAL, and AKTKNNLASAYLKQNKYQQAEELYKEILSQEALP. The segment at 409-439 is disordered; the sequence is APLGAPQGGTAGEAQQQVLRRSSSFSKLRES. The span at 421 to 434 shows a compositional bias: polar residues; the sequence is EAQQQVLRRSSSFS. A Phosphoserine modification is found at Ser467. A disordered region spans residues 486-505; sequence QHLNEASRTLSASTQDLSPR. A Phosphothreonine modification is found at Thr499. Ser503 is modified (phosphoserine).

It belongs to the kinesin light chain family. In terms of assembly, oligomer composed of two heavy chains and two light chains. Associates with microtubulin in an ATP-dependent manner. Interacts with KIF5C. Interacts with ODF1. Interacts with LRGUK. Interacts with VDAC2. In terms of tissue distribution, expressed in postmeiotic male germ cells (at protein level).

The protein resides in the cytoplasm. It localises to the cytoskeleton. Its subcellular location is the mitochondrion. Its function is as follows. Kinesin is a microtubule-associated force-producing protein that may play a role in organelle transport. Plays a role during spermiogenesis in the development of the sperm tail midpiece and in the normal function of spermatozoa. May play a role in the formation of the mitochondrial sheath formation in the developing spermatid midpiece. This Rattus norvegicus (Rat) protein is Kinesin light chain 3 (Klc3).